Consider the following 491-residue polypeptide: Ligand-gated ion channel 50 (491 aa).

Positions 1–19 (MRFLLVLQLVFFYFSAATT) are cleaved as a signal peptide. N-linked (GlcNAc...) asparagine glycans are attached at residues asparagine 55 and asparagine 101. A disulfide bond links cysteine 157 and cysteine 171. The next 3 membrane-spanning stretches (helical) occupy residues 241-261 (LFQS…GFFF), 265-287 (SVSA…FGNV), and 302-322 (VWMI…AIVC). Asparagine 418 carries an N-linked (GlcNAc...) asparagine glycan. Residues 465 to 485 (MIMFPLSFLIFNVVYWSIYFM) traverse the membrane as a helical segment.

This sequence belongs to the ligand-gated ion channel (TC 1.A.9) family.

It is found in the postsynaptic cell membrane. The protein localises to the cell membrane. This is Ligand-gated ion channel 50 (lgc-50) from Caenorhabditis elegans.